Consider the following 75-residue polypeptide: MKKDIHPAYVETQVTCTCGATFTTRSTATSGTIHADVCSQCHPFYTGKQKILDTGGRVARFEARYAKKAAADAKK.

Positions 16, 18, 38, and 41 each coordinate Zn(2+).

Belongs to the bacterial ribosomal protein bL31 family. Type A subfamily. Part of the 50S ribosomal subunit. The cofactor is Zn(2+).

Functionally, binds the 23S rRNA. In Nocardioides sp. (strain ATCC BAA-499 / JS614), this protein is Large ribosomal subunit protein bL31.